A 186-amino-acid polypeptide reads, in one-letter code: ADP-ribosylation factor-like protein DDB_G0292332 (186 aa).

Residues 24–31 (GVENVGKT), 78–82 (DIGGK), and 138–141 (NKQD) contribute to the GTP site.

Belongs to the small GTPase superfamily. Arf family.

Functionally, binds and exchanges GTP and GDP. This chain is ADP-ribosylation factor-like protein DDB_G0292332, found in Dictyostelium discoideum (Social amoeba).